Here is a 512-residue protein sequence, read N- to C-terminus: MRAEVLQIRWHYDANDDHTPIYSVDFQKNSLNKFATCGGDSKIRIWQLITSESSTKVEYLSTLSRHTQAVNVVRFNPEGNILATAGDEGTIMLWVPTNTPITTLADDAEELALAKEYWKVKIVCRSMGSEIYDLCWSVDSNFLIAGAMDNSLRLYDAHTGQLLTQKFDHSHYVQGVCWDPLNQYIVSESSDRSICLYEIQEEKKNPKKFQLVLKSRICRIEYNVTKFELISVTKPLNNDESSGISEPIETSNNNESPVSKHEALSSTANIVKDGSLERTEPPNSLNSKISYSLYCNETLVSFFRRPAFSPDGLLLVTPAGRLRPHGQPNFEVPYTAYIYTRGSITKQPVACLNGFKKPVIAVRFSPIHYELNSFSNFSFTSVSFNLPYRMVFAVACQDAVYIYDTQTCKPFYRAVNLHYSNLTDIAWNDDGNVLLMTSIDGFCSVITFEPGELGVKSQHKISLPEKRSASPSSIDDSQDNTAGGPATTTLIPRKVESSKVSKKRIAPTPVYP.

4 WD repeats span residues 16–56 (DDHT…SSTK), 65–105 (RHTQ…TTLA), 126–165 (SMGS…LLTQ), and 168–207 (DHSH…KNPK). Positions 239 to 257 (DESSGISEPIETSNNNESP) are enriched in polar residues. Residues 239 to 261 (DESSGISEPIETSNNNESPVSKH) are disordered. 2 WD repeats span residues 373–413 (SFSN…PFYR) and 417–458 (LHYS…VKSQ). A disordered region spans residues 459–512 (HKISLPEKRSASPSSIDDSQDNTAGGPATTTLIPRKVESSKVSKKRIAPTPVYP). Ser468, Ser470, and Ser473 each carry phosphoserine. Polar residues predominate over residues 469–490 (ASPSSIDDSQDNTAGGPATTTL).

The protein belongs to the WD repeat HIR1 family. In terms of assembly, component of chromatin assembly factor 1 (CAF-1), composed of pcf1, pcf2 and pcf3. Interacts with pcn1/PCNA during S-phase. Interacts with swi6 at the G1/S-phase transition and early S-phase, but not in the G2 phase. The CAF-1 complex interacts with histone H3-H4 dimers.

Its subcellular location is the cytoplasm. It localises to the nucleus. In terms of biological role, acts as a component of the histone chaperone complex chromatin assembly factor 1 (CAF-1), which assembles histone octamers onto DNA during replication and repair. CAF-1 performs the first step of the nucleosome assembly process, bringing newly synthesized histones H3 and H4 to replicating DNA; histones H2A/H2B can bind to this chromatin precursor subsequent to DNA replication to complete the histone octamer. Plays a role in the maintenance of heterochromatin. This is Chromatin assembly factor 1 subunit B from Schizosaccharomyces pombe (strain 972 / ATCC 24843) (Fission yeast).